The following is a 323-amino-acid chain: uncharacterized protein (323 aa).

Transmembrane regions (helical) follow at residues 8-28 (FLVI…MFME), 32-52 (LTLL…PFSL), and 92-112 (ITIF…CGIF).

It localises to the mitochondrion membrane. This is an uncharacterized protein from Neurospora crassa (strain ATCC 24698 / 74-OR23-1A / CBS 708.71 / DSM 1257 / FGSC 987).